The primary structure comprises 682 residues: Serine/threonine-protein kinase PLK2 (682 aa).

The segment at 25–67 is disordered; the sequence is ACGGDSKKKRPQQPSEDGQPQAQVTPAAPHHHHHHSHSGPEIS. Over residues 36 to 48 the composition is skewed to polar residues; sequence QQPSEDGQPQAQV. A Protein kinase domain is found at 79–331; the sequence is YCRGKVLGKG…LDDIIRHDFF (253 aa). Residues 85-93 and Lys108 each bind ATP; that span reads LGKGGFAKC. Asp202 functions as the Proton acceptor in the catalytic mechanism. A Phosphothreonine modification is found at Thr236. Positions 403 to 432 are disordered; it reads SITQQPSKHRADEEPQPPPTTVARSGTSAV. 2 consecutive POLO box domains span residues 500-578 and 598-682; these read WVTK…YMEE and YLLQ…QRCN.

Belongs to the protein kinase superfamily. Ser/Thr protein kinase family. CDC5/Polo subfamily. As to quaternary structure, interacts with NSF; causing NSF dissociation from GRIA2. Interacts with CIB1. Post-translationally, catalytic activity is enhanced by phosphorylation of Thr-236. In terms of tissue distribution, brain, lung and heart.

Its subcellular location is the cytoplasm. It is found in the cytoskeleton. It localises to the microtubule organizing center. The protein localises to the centrosome. The protein resides in the centriole. Its subcellular location is the cell projection. It is found in the dendrite. It carries out the reaction L-seryl-[protein] + ATP = O-phospho-L-seryl-[protein] + ADP + H(+). The catalysed reaction is L-threonyl-[protein] + ATP = O-phospho-L-threonyl-[protein] + ADP + H(+). Its activity is regulated as follows. Activated by phosphorylation of Thr-236. Once activated, activity is stimulated by binding target proteins. Functionally, tumor suppressor serine/threonine-protein kinase involved in synaptic plasticity, centriole duplication and G1/S phase transition. Polo-like kinases act by binding and phosphorylating proteins that are already phosphorylated on a specific motif recognized by the POLO box domains. Phosphorylates CPAP, NPM1, RAPGEF2, RASGRF1, SNCA, SIPA1L1 and SYNGAP1. Plays a key role in synaptic plasticity and memory by regulating the Ras and Rap protein signaling: required for overactivity-dependent spine remodeling by phosphorylating the Ras activator RASGRF1 and the Rap inhibitor SIPA1L1 leading to their degradation by the proteasome. Conversely, phosphorylates the Rap activator RAPGEF2 and the Ras inhibitor SYNGAP1, promoting their activity. Also regulates synaptic plasticity independently of kinase activity, via its interaction with NSF that disrupts the interaction between NSF and the GRIA2 subunit of AMPARs, leading to a rapid rundown of AMPAR-mediated current that occludes long term depression. Required for procentriole formation and centriole duplication by phosphorylating CPAP and NPM1, respectively. Its induction by p53/TP53 suggests that it may participate in the mitotic checkpoint following stress. The polypeptide is Serine/threonine-protein kinase PLK2 (Plk2) (Mus musculus (Mouse)).